Here is a 181-residue protein sequence, read N- to C-terminus: Ribonuclease M5 (181 aa).

In terms of domain architecture, Toprim spans 3-86 (KEVIVVEGRD…AYISQEEGTK (84 aa)). The Mg(2+) site is built by Glu-9, Asp-55, and Asp-57.

This sequence belongs to the ribonuclease M5 family. Mg(2+) is required as a cofactor.

Its subcellular location is the cytoplasm. It carries out the reaction Endonucleolytic cleavage of RNA, removing 21 and 42 nucleotides, respectively, from the 5'- and 3'-termini of a 5S-rRNA precursor.. In terms of biological role, required for correct processing of both the 5' and 3' ends of 5S rRNA precursor. Cleaves both sides of a double-stranded region yielding mature 5S rRNA in one step. This Clostridium botulinum (strain Hall / ATCC 3502 / NCTC 13319 / Type A) protein is Ribonuclease M5.